The primary structure comprises 217 residues: Mucosal pentraxin (217 aa).

The N-terminal stretch at 1 to 19 (MEKLLLGVLLLAFLPEGMT) is a signal peptide. Residues 24-217 (RGKVFIFPEQ…KGYVVVKPKL (194 aa)) form the Pentraxin (PTX) domain. Residues C55 and C114 are joined by a disulfide bond. Ca(2+) is bound by residues D77, N78, E155, Q156, D157, and Q167.

This sequence belongs to the pentraxin family. Homopentamer. Pentraxin (or pentaxin) have a discoid arrangement of 5 non-covalently bound subunits. It depends on Ca(2+) as a cofactor.

It is found in the secreted. The polypeptide is Mucosal pentraxin (MPTX) (Bos taurus (Bovine)).